We begin with the raw amino-acid sequence, 635 residues long: MDISDEESEISESEIEEYSKTPYHLLRSETYYKVKVNGRLRCPFCVGKKKQDYKYKELHAHATGVSKGSATRSALQKSNHLALAKFLENDLAGYAEPLPRPPVVPPLLDETEPNPHNVYVWPWMGIVVNPLKETDDKELLLDSVYWLQTLSKFKPVEVNAFWVEQDSIVGVIAKFDSDWSGFAAATELEKEFETQGSCKKEWTERSGDSESKAYGWCARADDFQSQGPIGEYLSKEGTLRTVSDILQNNVQDRNTLLDVLSNMIDMTNEDLNKAQHSYNRTAMSLQRVLDEKKNLHQAFAEETKKMQQMSLRHIQRILYDKEKLRNELDRKMRDLESRAKQLEKHEALTELERQKLDEDKRKSDAMNKSLQLASREQKKADESVLRLVEEHQRQKEDALNKILLLEKQLDTKQTLEMEIQELKGKLQVMKHLGDDDDEAVQTKMKEMNDELDDKKAELEDLESMNSVLMTKERQSNDEIQAARQKMIAGLTGLLGAESDIGVKRMGELDEKPFLDVCKLRYSANEARVEAATLCSTWKENLKNPSWQPFKREGTGDGAEEVVDEDDEQLKKLKREWGKEVHNAVKAALVEMNEYNASGRYPTSELWNFKEGRKATLKEVITFISTDIKNLKRKRT.

Positions 289–471 (LDEKKNLHQA…ESMNSVLMTK (183 aa)) form a coiled coil. The span at 350–365 (ELERQKLDEDKRKSDA) shows a compositional bias: basic and acidic residues. A disordered region spans residues 350–376 (ELERQKLDEDKRKSDAMNKSLQLASRE).

Forms a complex with IDN2 and FMD1/INDL1. As to expression, highly expressed in flowers and at lower levels in roots, leaves and stems.

Its function is as follows. Forms a complex with IDN2 and FDM1/IDNL1 that is required for RNA-directed DNA methylation (RdDM) and that functions at a downstream step of the RdDM pathway. In Arabidopsis thaliana (Mouse-ear cress), this protein is Factor of DNA methylation 2.